A 68-amino-acid polypeptide reads, in one-letter code: Disintegrin EMS11A (68 aa).

The Disintegrin domain occupies 1–65 (NSAHPCCDPV…DCPRNRYKGK (65 aa)). Intrachain disulfides connect cysteine 6–cysteine 29, cysteine 20–cysteine 26, cysteine 25–cysteine 50, and cysteine 38–cysteine 57. Residues 42 to 44 (MLD) carry the Cell attachment site; atypical (MLD) motif.

This sequence belongs to the disintegrin family. Dimeric disintegrin subfamily. Heterodimer; disulfide-linked. In terms of tissue distribution, expressed by the venom gland.

The protein localises to the secreted. Its function is as follows. Poor inhibitor of platelet aggregation. The disintegrin inhibits the adhesion of both the alpha-4/beta-1 (ITGA4/ITGB1) and the alpha-5/beta-1 (ITGA5/ITGB1) integrins to VCAM-1 and fibronectin respectively with almost the same degree of specificity. Inhibition on alpha-IIb/beta-3 (ITGA2B/ITGB3) is low. The protein is Disintegrin EMS11A of Echis multisquamatus (Central Asian sand viper).